Reading from the N-terminus, the 198-residue chain is Probable thymidylate kinase (198 aa).

9-16 (GIDGSGKT) contacts ATP.

This sequence belongs to the thymidylate kinase family.

It catalyses the reaction dTMP + ATP = dTDP + ADP. The polypeptide is Probable thymidylate kinase (Methanococcus vannielii (strain ATCC 35089 / DSM 1224 / JCM 13029 / OCM 148 / SB)).